We begin with the raw amino-acid sequence, 347 residues long: Holliday junction branch migration complex subunit RuvB (347 aa).

The tract at residues 1-180 is large ATPase domain (RuvB-L); it reads MTSRVVSPEQ…FGIPCRMNFY (180 aa). Residues Leu19, Arg20, Gly61, Lys64, Thr65, Thr66, 127–129, Arg170, Tyr180, and Arg217 each bind ATP; that span reads EDF. Position 65 (Thr65) interacts with Mg(2+). Residues 181-251 are small ATPAse domain (RuvB-S); the sequence is EPAELEAIVS…VADAALNRLE (71 aa). The tract at residues 254-347 is head domain (RuvB-H); that stretch reads RIGLDAMDRR…LLTRMDEEGE (94 aa). Positions 290, 309, and 314 each coordinate DNA.

It belongs to the RuvB family. Homohexamer. Forms an RuvA(8)-RuvB(12)-Holliday junction (HJ) complex. HJ DNA is sandwiched between 2 RuvA tetramers; dsDNA enters through RuvA and exits via RuvB. An RuvB hexamer assembles on each DNA strand where it exits the tetramer. Each RuvB hexamer is contacted by two RuvA subunits (via domain III) on 2 adjacent RuvB subunits; this complex drives branch migration. In the full resolvosome a probable DNA-RuvA(4)-RuvB(12)-RuvC(2) complex forms which resolves the HJ.

It localises to the cytoplasm. It carries out the reaction ATP + H2O = ADP + phosphate + H(+). In terms of biological role, the RuvA-RuvB-RuvC complex processes Holliday junction (HJ) DNA during genetic recombination and DNA repair, while the RuvA-RuvB complex plays an important role in the rescue of blocked DNA replication forks via replication fork reversal (RFR). RuvA specifically binds to HJ cruciform DNA, conferring on it an open structure. The RuvB hexamer acts as an ATP-dependent pump, pulling dsDNA into and through the RuvAB complex. RuvB forms 2 homohexamers on either side of HJ DNA bound by 1 or 2 RuvA tetramers; 4 subunits per hexamer contact DNA at a time. Coordinated motions by a converter formed by DNA-disengaged RuvB subunits stimulates ATP hydrolysis and nucleotide exchange. Immobilization of the converter enables RuvB to convert the ATP-contained energy into a lever motion, pulling 2 nucleotides of DNA out of the RuvA tetramer per ATP hydrolyzed, thus driving DNA branch migration. The RuvB motors rotate together with the DNA substrate, which together with the progressing nucleotide cycle form the mechanistic basis for DNA recombination by continuous HJ branch migration. Branch migration allows RuvC to scan DNA until it finds its consensus sequence, where it cleaves and resolves cruciform DNA. The polypeptide is Holliday junction branch migration complex subunit RuvB (Paramagnetospirillum magneticum (strain ATCC 700264 / AMB-1) (Magnetospirillum magneticum)).